A 205-amino-acid chain; its full sequence is Small ribosomal subunit protein uS2 (205 aa).

Belongs to the universal ribosomal protein uS2 family.

This chain is Small ribosomal subunit protein uS2 (rps2), found in Aeropyrum pernix (strain ATCC 700893 / DSM 11879 / JCM 9820 / NBRC 100138 / K1).